The chain runs to 488 residues: MAATLLRAKPKVTVSFEDVSVYFTKTEWRLLDLKQRTLYKQVMLENYSHLVSVGFAFSKPNLVSQLERGEKPWIRDDGMESAARSCAGNRIKTKTLTSKPKLFGRGLLRNTSRSSLQRRPHDFRPNPIVRYQHSRIADKRYLCQQCGKSFSRSFNLIKHRIIHSREKPYECSECGKQFQRSLALLEHQRIHSGDKPYECGECGKTFTRSSNLVKHQVIHSSEMPFVCRMCGKVFRRSFALLEHTRIHSGERPFECTECGKAFSRSSNLIEHQRIHSGQKPYICKECGKAFKGVSQLIHHQLIHRGDKPFTCHEYGKAFRGLSGLSQHQRVHRGEKPYECSECGRAFGRRANLFKHQVVHGGVRLQHRTRGKGFQRKLLEHLRDLHGQQPQEAGEGSSAEPQPIDTNEKPQVCERCGQVFENKLLLCRHLRIHDDEDDKKQKPVISSTSVLEDKSLLSQHLEAQPTEESDSEGSVVFVYAEKPHGPSSP.

Residues 14–85 (VSFEDVSVYF…DDGMESAARS (72 aa)) form the KRAB domain. 6 consecutive C2H2-type zinc fingers follow at residues 141 to 163 (YLCQQCGKSFSRSFNLIKHRIIH), 169 to 191 (YECSECGKQFQRSLALLEHQRIH), 197 to 219 (YECGECGKTFTRSSNLVKHQVIH), 225 to 247 (FVCRMCGKVFRRSFALLEHTRIH), 253 to 275 (FECTECGKAFSRSSNLIEHQRIH), and 281 to 303 (YICKECGKAFKGVSQLIHHQLIH). The segment at 309 to 331 (FTCHEYGKAFRGLSGLSQHQRVH) adopts a C2H2-type 7; degenerate zinc-finger fold. The C2H2-type 8 zinc finger occupies 337 to 359 (YECSECGRAFGRRANLFKHQVVH). Positions 387-408 (QQPQEAGEGSSAEPQPIDTNEK) are disordered. The C2H2-type 9 zinc-finger motif lies at 410-432 (QVCERCGQVFENKLLLCRHLRIH). The tract at residues 435–488 (EDDKKQKPVISSTSVLEDKSLLSQHLEAQPTEESDSEGSVVFVYAEKPHGPSSP) is disordered.

The protein belongs to the krueppel C2H2-type zinc-finger protein family. Highly expressed in pancreatic islets.

Its subcellular location is the nucleus. KRAB domain-containing zinc-finger protein that represses B1/Alu SINE transposable elements and modulates the transcription of nearby genes in a tissue-specific manner. It regulates glucose homeostasis and lipid metabolism by modulating the expression of the endocrine cell-defining transcription factor, MAFB, in pancreatic islets and, the fat metabolism regulator, ACACB, in adipose tissue and muscle. This Mus musculus (Mouse) protein is Zinc finger protein 92 (Zfp92).